Consider the following 111-residue polypeptide: Small ribosomal subunit protein mS38 (111 aa).

Basic residues predominate over residues 82–99; the sequence is RKRKKKMKKHKLRKRRKR. Residues 82-111 form a disordered region; it reads RKRKKKMKKHKLRKRRKREKAERRKLSQGR. Basic and acidic residues predominate over residues 100–111; the sequence is EKAERRKLSQGR.

Belongs to the mitochondrion-specific ribosomal protein mS38 family. In terms of assembly, component of the mitochondrial small ribosomal subunit (mt-SSU). Mature yeast 74S mitochondrial ribosomes consist of a small (37S) and a large (54S) subunit. The 37S small subunit contains a 15S ribosomal RNA (15S mt-rRNA) and 34 different proteins. The 54S large subunit contains a 21S rRNA (21S mt-rRNA) and 46 different proteins.

Its subcellular location is the mitochondrion. It localises to the mitochondrion inner membrane. Its function is as follows. Component of the mitochondrial ribosome (mitoribosome), a dedicated translation machinery responsible for the synthesis of mitochondrial genome-encoded proteins, including at least some of the essential transmembrane subunits of the mitochondrial respiratory chain. The mitoribosomes are attached to the mitochondrial inner membrane and translation products are cotranslationally integrated into the membrane. mS38 is also involved in the splicing of the COX1 mRNA. This chain is Small ribosomal subunit protein mS38 (QRI5), found in Saccharomyces cerevisiae (strain ATCC 204508 / S288c) (Baker's yeast).